The following is a 289-amino-acid chain: Glycine--tRNA ligase alpha subunit (289 aa).

This sequence belongs to the class-II aminoacyl-tRNA synthetase family. In terms of assembly, tetramer of two alpha and two beta subunits.

The protein localises to the cytoplasm. The catalysed reaction is tRNA(Gly) + glycine + ATP = glycyl-tRNA(Gly) + AMP + diphosphate. The protein is Glycine--tRNA ligase alpha subunit of Prochlorococcus marinus (strain MIT 9515).